The sequence spans 206 residues: MEKLTKRQQDILDFIKLKVQEKGYPPSVREIGQAVGLASSSTVHGHLSRLEEKGYIRRDPTKPRAIEILGEERIEISTQSVVQVPIVGKVTAGLPITAVESVEEHFPLPASIIAGADQVFMLRISGDSMIEAGIFDGDLVVVRQQHSANNGEIVVALTEDNEATVKRFYKEKDHFRLQPENSSLEPIILNTVSVIGKVIGVYRDLH.

A DNA-binding region (H-T-H motif) is located at residues 28-48 (VREIGQAVGLASSSTVHGHLS). Catalysis depends on for autocatalytic cleavage activity residues serine 128 and lysine 166.

It belongs to the peptidase S24 family. Homodimer.

The catalysed reaction is Hydrolysis of Ala-|-Gly bond in repressor LexA.. Its function is as follows. Represses a number of genes involved in the response to DNA damage (SOS response), including recA and lexA. In the presence of single-stranded DNA, RecA interacts with LexA causing an autocatalytic cleavage which disrupts the DNA-binding part of LexA, leading to derepression of the SOS regulon and eventually DNA repair. This Bacillus cytotoxicus (strain DSM 22905 / CIP 110041 / 391-98 / NVH 391-98) protein is LexA repressor.